The sequence spans 181 residues: Oligoribonuclease (181 aa).

One can recognise an Exonuclease domain in the interval 8–171 (LIWLDLEMTG…DDIKESIAEL (164 aa)). The active site involves Y129.

This sequence belongs to the oligoribonuclease family.

It localises to the cytoplasm. Its function is as follows. 3'-to-5' exoribonuclease specific for small oligoribonucleotides. This is Oligoribonuclease from Colwellia psychrerythraea (strain 34H / ATCC BAA-681) (Vibrio psychroerythus).